A 329-amino-acid chain; its full sequence is NADH-quinone oxidoreductase subunit H 2 (329 aa).

The next 8 helical transmembrane spans lie at glycine 12 to alanine 32, tryptophan 78 to isoleucine 98, valine 120 to glycine 140, leucine 159 to serine 179, glycine 191 to alanine 211, leucine 242 to phenylalanine 262, leucine 270 to tryptophan 290, and lysine 309 to valine 329.

This sequence belongs to the complex I subunit 1 family. As to quaternary structure, NDH-1 is composed of 14 different subunits. Subunits NuoA, H, J, K, L, M, N constitute the membrane sector of the complex.

It is found in the cell inner membrane. The catalysed reaction is a quinone + NADH + 5 H(+)(in) = a quinol + NAD(+) + 4 H(+)(out). Functionally, NDH-1 shuttles electrons from NADH, via FMN and iron-sulfur (Fe-S) centers, to quinones in the respiratory chain. The immediate electron acceptor for the enzyme in this species is believed to be ubiquinone. Couples the redox reaction to proton translocation (for every two electrons transferred, four hydrogen ions are translocated across the cytoplasmic membrane), and thus conserves the redox energy in a proton gradient. This subunit may bind ubiquinone. In Geobacter sulfurreducens (strain ATCC 51573 / DSM 12127 / PCA), this protein is NADH-quinone oxidoreductase subunit H 2.